A 261-amino-acid chain; its full sequence is Putative diacylated glycolipid transporter LprF (261 aa).

A signal peptide spans 1 to 38; sequence MNGLISQACGSHRPRRPSSLGAVAILIAATLFATVVAG. Residue Cys39 is the site of N-palmitoyl cysteine attachment. Cys39 carries S-diacylglycerol cysteine lipidation. The tract at residues 42–61 is disordered; that stretch reads KPTTASSPSPGSPSPEAQQI.

Belongs to the LppX/LprAFG lipoprotein family. Monomer. In terms of processing, modified by Lgt on Cys-39 with an S-linked diacylglycerol with a mixture of C16, C18 and C19 fatty acids (palmitic, stearic and tuberculostearic acid respectively), signal peptide is removed by LspA, modified by Lnt with an amide-linked mixture of C16 and C19 fatty acids.

Its subcellular location is the cell membrane. In terms of biological role, might be involved in transporting short diacylated glycolipids to the cell outer membrane. Binds glycolipids that contain a diacylated glycerophosphate or a diacylated phosphatidylinositol moiety with C14 and C16 chains (upon overexpression in M.smegmatis; M.smegmatis does not encode this gene). Overexpression in M.smegmatis increases the cell wall glycolipid LAM/LM ratio (lipoarabinomannan/lipomannan), suggesting perhaps this protein is involved in the preferential translocation of diacylated LAM to the outer cell membrane. Overexpressing M.smegmatis cells adhere less well to hexadecane droplets, indicating decrease in the hydrophobicity of the cell surface, and have a slightly increased resistance to the antibiotic ethambutol. The chain is Putative diacylated glycolipid transporter LprF (lprF) from Mycobacterium bovis (strain ATCC BAA-935 / AF2122/97).